A 261-amino-acid polypeptide reads, in one-letter code: Claudin-18 (261 aa).

At Met-1–Cys-6 the chain is on the cytoplasmic side. The helical transmembrane segment at Gln-7–Met-27 threads the bilayer. Over Asp-28–Arg-80 the chain is Extracellular. The chain crosses the membrane as a helical span at residues Ala-81–Leu-101. At Lys-102 to Gly-122 the chain is on the cytoplasmic side. A helical membrane pass occupies residues Ile-123 to Leu-143. Over Val-144–Ala-174 the chain is Extracellular. Residues Leu-175 to Ala-195 traverse the membrane as a helical segment. The segment at Ala-195–Val-261 is required for role in regulation of RANKL-induced osteoclast differentiation. Residues Cys-196 to Val-261 lie on the Cytoplasmic side of the membrane. Residue Ser-214 is modified to Phosphoserine. The interval Ser-228–Val-261 is disordered. Over residues Lys-239 to Asp-249 the composition is skewed to basic and acidic residues.

It belongs to the claudin family. Interacts with TJP2/ZO-2. Interacts with TJP1/ZO-1. Interacts with YAP1 (phosphorylated); the interaction sequesters YAP1 away from the nucleus and thereby restricts transcription of YAP1 target genes. Interacts with CLDN19.

It localises to the cell junction. The protein localises to the tight junction. Its subcellular location is the cell membrane. Involved in alveolar fluid homeostasis via regulation of alveolar epithelial tight junction composition and therefore ion transport and solute permeability, potentially via downstream regulation of the actin cytoskeleton organization and beta-2-adrenergic signaling. Required for lung alveolarization and maintenance of the paracellular alveolar epithelial barrier. Acts to maintain epithelial progenitor cell proliferation and organ size, via regulation of YAP1 localization away from the nucleus and thereby restriction of YAP1 target gene transcription. Acts as a negative regulator of RANKL-induced osteoclast differentiation, potentially via relocation of TJP2/ZO-2 away from the nucleus, subsequently involved in bone resorption in response to calcium deficiency. Mediates the osteoprotective effects of estrogen, potentially via acting downstream of estrogen signaling independently of RANKL signaling pathways. The polypeptide is Claudin-18 (CLDN18) (Bos taurus (Bovine)).